The primary structure comprises 226 residues: MMLRIPALLSPDEVRQCRQALEQAPWQDGRATAGPLAAQVKANLQLPLDSQAGQAIGNLILDKLGASALFMSATLPLKVLPPRFNRYEGGGTYGNHIDNAIFTIPGTAIKVRSDVSTTVFFSEPDEYEGGELIVEDTFGHQSVKLAAGDAIVYPGTSLHRVNPVTRGTRYASFFWTHSLVASDEKRRILFDLDQQIQQLTVRHPGDPALSALSGTYHNLLRMWSQA.

Residues 78–178 (KVLPPRFNRY…RYASFFWTHS (101 aa)) form the Fe2OG dioxygenase domain. The Fe cation site is built by H96, D98, and H159. R169 contributes to the 2-oxoglutarate binding site.

Fe(2+) is required as a cofactor. L-ascorbate serves as cofactor.

The protein is PKHD-type hydroxylase Daci_1172 of Delftia acidovorans (strain DSM 14801 / SPH-1).